We begin with the raw amino-acid sequence, 715 residues long: Fatty acid oxidation complex subunit alpha (715 aa).

Positions 1–190 (MTTTSAFMLN…KAGLVDDVVP (190 aa)) are enoyl-CoA hydratase. Residues 306–714 (GPLNSVGILG…FWTNGETDQG (409 aa)) are 3-hydroxyacyl-CoA dehydrogenase.

In the N-terminal section; belongs to the enoyl-CoA hydratase/isomerase family. It in the central section; belongs to the 3-hydroxyacyl-CoA dehydrogenase family. In terms of assembly, heterotetramer of two alpha chains (FadJ) and two beta chains (FadI).

It is found in the cytoplasm. The catalysed reaction is a (3S)-3-hydroxyacyl-CoA = a (2E)-enoyl-CoA + H2O. It catalyses the reaction a 4-saturated-(3S)-3-hydroxyacyl-CoA = a (3E)-enoyl-CoA + H2O. The enzyme catalyses a (3S)-3-hydroxyacyl-CoA + NAD(+) = a 3-oxoacyl-CoA + NADH + H(+). It carries out the reaction (3S)-3-hydroxybutanoyl-CoA = (3R)-3-hydroxybutanoyl-CoA. It participates in lipid metabolism; fatty acid beta-oxidation. Catalyzes the formation of a hydroxyacyl-CoA by addition of water on enoyl-CoA. Also exhibits 3-hydroxyacyl-CoA epimerase and 3-hydroxyacyl-CoA dehydrogenase activities. The polypeptide is Fatty acid oxidation complex subunit alpha (Salmonella choleraesuis (strain SC-B67)).